Here is a 130-residue protein sequence, read N- to C-terminus: Small ribosomal subunit protein uS8 (130 aa).

Belongs to the universal ribosomal protein uS8 family. As to quaternary structure, part of the 30S ribosomal subunit.

Functionally, one of the primary rRNA binding proteins, it binds directly to 16S rRNA central domain where it helps coordinate assembly of the platform of the 30S subunit. This chain is Small ribosomal subunit protein uS8, found in Thermococcus gammatolerans (strain DSM 15229 / JCM 11827 / EJ3).